Consider the following 312-residue polypeptide: Ribonuclease HIII (312 aa).

The RNase H type-2 domain occupies 95-311 (FNCIGSDEAG…REKAQKILKP (217 aa)). 3 residues coordinate a divalent metal cation: Asp101, Glu102, and Asp206.

It belongs to the RNase HII family. RnhC subfamily. It depends on Mn(2+) as a cofactor. Mg(2+) serves as cofactor.

The protein resides in the cytoplasm. It carries out the reaction Endonucleolytic cleavage to 5'-phosphomonoester.. Endonuclease that specifically degrades the RNA of RNA-DNA hybrids. This is Ribonuclease HIII from Staphylococcus aureus (strain MSSA476).